We begin with the raw amino-acid sequence, 497 residues long: COP9 signalosome complex subunit 6 (497 aa).

The region spanning 21–162 (VALHPLPILE…LTIYESNLEI (142 aa)) is the MPN domain. Disordered stretches follow at residues 230–282 (ATED…KNRD), 324–350 (YLSSGDASSQQQQQQQQQQQTEGLDQP), and 435–497 (AKNS…RFDH). The segment covering 236 to 246 (SDKPLMKKVVD) has biased composition (basic and acidic residues). 2 stretches are compositionally biased toward low complexity: residues 258–272 (SDDAAAEAPTTSSAA) and 333–343 (QQQQQQQQQQQ). Positions 440 to 453 (RREQASHGGGERFN) are enriched in basic and acidic residues. Gly residues predominate over residues 475–488 (VGEGSASGSGGSGP).

This sequence belongs to the peptidase M67A family. CSN6 subfamily. Component of the COP9 signalosome (CSN) complex.

Its subcellular location is the cytoplasm. It localises to the nucleus. Its function is as follows. Component of the COP9 signalosome (CSN) complex that acts as an regulator of the ubiquitin (Ubl) conjugation pathway by mediating the deneddylation of the cullin subunit of SCF-type E3 ubiquitin-protein ligase complexes. The CSN complex is involved in the regulation of the circadian clock through its control of the stability of the SCF(FWD1) complex. This is COP9 signalosome complex subunit 6 (csn-6) from Neurospora crassa (strain ATCC 24698 / 74-OR23-1A / CBS 708.71 / DSM 1257 / FGSC 987).